A 307-amino-acid polypeptide reads, in one-letter code: Recombination-associated protein RdgC (307 aa).

Belongs to the RdgC family.

The protein localises to the cytoplasm. Its subcellular location is the nucleoid. In terms of biological role, may be involved in recombination. This chain is Recombination-associated protein RdgC, found in Burkholderia cenocepacia (strain ATCC BAA-245 / DSM 16553 / LMG 16656 / NCTC 13227 / J2315 / CF5610) (Burkholderia cepacia (strain J2315)).